We begin with the raw amino-acid sequence, 167 residues long: SsrA-binding protein (167 aa).

This sequence belongs to the SmpB family.

It is found in the cytoplasm. In terms of biological role, required for rescue of stalled ribosomes mediated by trans-translation. Binds to transfer-messenger RNA (tmRNA), required for stable association of tmRNA with ribosomes. tmRNA and SmpB together mimic tRNA shape, replacing the anticodon stem-loop with SmpB. tmRNA is encoded by the ssrA gene; the 2 termini fold to resemble tRNA(Ala) and it encodes a 'tag peptide', a short internal open reading frame. During trans-translation Ala-aminoacylated tmRNA acts like a tRNA, entering the A-site of stalled ribosomes, displacing the stalled mRNA. The ribosome then switches to translate the ORF on the tmRNA; the nascent peptide is terminated with the 'tag peptide' encoded by the tmRNA and targeted for degradation. The ribosome is freed to recommence translation, which seems to be the essential function of trans-translation. This is SsrA-binding protein from Stenotrophomonas maltophilia (strain K279a).